Consider the following 140-residue polypeptide: Small ribosomal subunit protein uS12 (140 aa).

Residues 1–28 are disordered; the sequence is MPTINQLVRKSRKALEKKSTAPALQKGY. Asp102 bears the 3-methylthioaspartic acid mark. The tract at residues 119–140 is disordered; the sequence is GVDKRRQSRSKYGAKRPKEAKK. Over residues 124–140 the composition is skewed to basic residues; the sequence is RQSRSKYGAKRPKEAKK.

The protein belongs to the universal ribosomal protein uS12 family. As to quaternary structure, part of the 30S ribosomal subunit. Contacts proteins S8 and S17. May interact with IF1 in the 30S initiation complex.

In terms of biological role, with S4 and S5 plays an important role in translational accuracy. Functionally, interacts with and stabilizes bases of the 16S rRNA that are involved in tRNA selection in the A site and with the mRNA backbone. Located at the interface of the 30S and 50S subunits, it traverses the body of the 30S subunit contacting proteins on the other side and probably holding the rRNA structure together. The combined cluster of proteins S8, S12 and S17 appears to hold together the shoulder and platform of the 30S subunit. The chain is Small ribosomal subunit protein uS12 from Clostridioides difficile (strain 630) (Peptoclostridium difficile).